A 462-amino-acid polypeptide reads, in one-letter code: Asparagine--tRNA ligase (462 aa).

Belongs to the class-II aminoacyl-tRNA synthetase family. Homodimer.

The protein localises to the cytoplasm. It carries out the reaction tRNA(Asn) + L-asparagine + ATP = L-asparaginyl-tRNA(Asn) + AMP + diphosphate + H(+). This chain is Asparagine--tRNA ligase, found in Thermosynechococcus vestitus (strain NIES-2133 / IAM M-273 / BP-1).